Consider the following 541-residue polypeptide: Chaperonin GroEL (541 aa).

ATP is bound by residues threonine 29–proline 32, aspartate 86–threonine 90, glycine 413, aspartate 477–leucine 479, and aspartate 493.

This sequence belongs to the chaperonin (HSP60) family. Forms a cylinder of 14 subunits composed of two heptameric rings stacked back-to-back. Interacts with the co-chaperonin GroES.

The protein localises to the cytoplasm. The enzyme catalyses ATP + H2O + a folded polypeptide = ADP + phosphate + an unfolded polypeptide.. Together with its co-chaperonin GroES, plays an essential role in assisting protein folding. The GroEL-GroES system forms a nano-cage that allows encapsulation of the non-native substrate proteins and provides a physical environment optimized to promote and accelerate protein folding. This is Chaperonin GroEL from Clostridium botulinum (strain ATCC 19397 / Type A).